Consider the following 601-residue polypeptide: Trehalose synthase/amylase TreS (601 aa).

Positions 1 to 21 (MNEAEHSVEHPPVQGSHVEGG) are disordered. Substrate is bound at residue Asp98. Asn140 lines the Ca(2+) pocket. Residues His141 and Gln206 each contribute to the substrate site. Asp208 contacts Ca(2+). Arg236 is a binding site for substrate. The Nucleophile role is filled by Asp238. Residues Tyr242, Leu243, and Glu245 each contribute to the Ca(2+) site. Catalysis depends on Glu280, which acts as the Proton donor. 2 residues coordinate substrate: His349 and Asp350.

Belongs to the glycosyl hydrolase 13 family. TreS subfamily. Homohexamer.

It carries out the reaction D-maltose = alpha,alpha-trehalose. The catalysed reaction is Endohydrolysis of (1-&gt;4)-alpha-D-glucosidic linkages in polysaccharides containing three or more (1-&gt;4)-alpha-linked D-glucose units.. The protein operates within glycan biosynthesis; glycogen biosynthesis. It participates in capsule biogenesis; capsule polysaccharide biosynthesis. Its function is as follows. Catalyzes the reversible interconversion of maltose and trehalose by transglucosylation. Also displays amylase activity, catalyzing the endohydrolysis of (1-&gt;4)-alpha-D-glucosidic linkages in glycogen and maltooligosaccharides such as maltoheptaose, to produce maltose which then can be converted to trehalose. TreS plays a key role in the utilization of trehalose for the production of glycogen and alpha-glucan via the TreS-Pep2 branch involved in the biosynthesis of maltose-1-phosphate (M1P). Might also function as a sensor and/or regulator of trehalose levels within the cell. Thus, when trehalose levels in the cell become dangerously low, TreS could expedite the conversion of glycogen to maltose via its amylase activity and then convert the maltose to trehalose; but this enzyme also could expedite or promote the conversion of trehalose to glycogen when cytoplasmic trehalose levels become too high. This Mycobacterium tuberculosis (strain CDC 1551 / Oshkosh) protein is Trehalose synthase/amylase TreS.